Reading from the N-terminus, the 200-residue chain is Probable nicotinate-nucleotide adenylyltransferase (200 aa).

The protein belongs to the NadD family.

It carries out the reaction nicotinate beta-D-ribonucleotide + ATP + H(+) = deamido-NAD(+) + diphosphate. It participates in cofactor biosynthesis; NAD(+) biosynthesis; deamido-NAD(+) from nicotinate D-ribonucleotide: step 1/1. Its function is as follows. Catalyzes the reversible adenylation of nicotinate mononucleotide (NaMN) to nicotinic acid adenine dinucleotide (NaAD). The protein is Probable nicotinate-nucleotide adenylyltransferase of Clostridium tetani (strain Massachusetts / E88).